A 198-amino-acid chain; its full sequence is Thymidine kinase (198 aa).

Residues 9-16 (STMNAGKS) and 87-90 (DEAQ) contribute to the ATP site. Residue Glu-88 is the Proton acceptor of the active site. Cys-145, Cys-147, Cys-182, and His-185 together coordinate Zn(2+).

This sequence belongs to the thymidine kinase family. In terms of assembly, homotetramer.

The protein localises to the cytoplasm. The catalysed reaction is thymidine + ATP = dTMP + ADP + H(+). This Ruegeria pomeroyi (strain ATCC 700808 / DSM 15171 / DSS-3) (Silicibacter pomeroyi) protein is Thymidine kinase.